The sequence spans 100 residues: Small ribosomal subunit protein uS14c (100 aa).

This sequence belongs to the universal ribosomal protein uS14 family. As to quaternary structure, part of the 30S ribosomal subunit.

It is found in the plastid. The protein localises to the cyanelle. Functionally, binds 16S rRNA, required for the assembly of 30S particles. This is Small ribosomal subunit protein uS14c from Cyanophora paradoxa.